Consider the following 309-residue polypeptide: Protein FdhE homolog (309 aa).

The protein belongs to the FdhE family.

It localises to the cytoplasm. Necessary for formate dehydrogenase activity. The sequence is that of Protein FdhE homolog from Pectobacterium atrosepticum (strain SCRI 1043 / ATCC BAA-672) (Erwinia carotovora subsp. atroseptica).